The primary structure comprises 399 residues: MASIDIAHERKTAATAGASARPHLAGLTRPLLMDALKAFGLPDNQLRMRAGQIWNGLYNRGFTDFERMTTLSKELRGKLADAFDISRLEIVTEQKSVDGTRKWLLRLPSGIPGVPGPEVETVYIPEEGRGTLCVSSQVGCTLTCTFCHTGTQKLVRNLTAGEIVGQILLARDALGEWPDGGRNSEDRLITNIVMMGMGEPLYNFENVRDALEVVSDGEGLSLSKRRITLSTSGVVPMIERAGEEIGCMLAISLHAVDDETRNRLVPLNKKYPIAELLEACRNYPGVSNARRITFEYVMLKGVNDSLEDAKALVRLLKHIPAKINLIPFNPWPGSPYECSDWEQIEKFADVVNRAGYASPVRTPRGRDIMAACGQLKSETVKARASERFKGEKAAAQPIA.

Glu-120 (proton acceptor) is an active-site residue. Residues 126–367 enclose the Radical SAM core domain; it reads EEGRGTLCVS…SPVRTPRGRD (242 aa). Cysteines 133 and 372 form a disulfide. [4Fe-4S] cluster is bound by residues Cys-140, Cys-144, and Cys-147. S-adenosyl-L-methionine is bound by residues 198 to 199, Ser-230, 252 to 254, and Asn-329; these read GE and SLH. Catalysis depends on Cys-372, which acts as the S-methylcysteine intermediate.

Belongs to the radical SAM superfamily. RlmN family. Requires [4Fe-4S] cluster as cofactor.

The protein localises to the cytoplasm. It carries out the reaction adenosine(2503) in 23S rRNA + 2 reduced [2Fe-2S]-[ferredoxin] + 2 S-adenosyl-L-methionine = 2-methyladenosine(2503) in 23S rRNA + 5'-deoxyadenosine + L-methionine + 2 oxidized [2Fe-2S]-[ferredoxin] + S-adenosyl-L-homocysteine. It catalyses the reaction adenosine(37) in tRNA + 2 reduced [2Fe-2S]-[ferredoxin] + 2 S-adenosyl-L-methionine = 2-methyladenosine(37) in tRNA + 5'-deoxyadenosine + L-methionine + 2 oxidized [2Fe-2S]-[ferredoxin] + S-adenosyl-L-homocysteine. Its function is as follows. Specifically methylates position 2 of adenine 2503 in 23S rRNA and position 2 of adenine 37 in tRNAs. m2A2503 modification seems to play a crucial role in the proofreading step occurring at the peptidyl transferase center and thus would serve to optimize ribosomal fidelity. The sequence is that of Dual-specificity RNA methyltransferase RlmN from Parvibaculum lavamentivorans (strain DS-1 / DSM 13023 / NCIMB 13966).